Here is a 254-residue protein sequence, read N- to C-terminus: NADPH-dependent ferric-chelate reductase (254 aa).

Positions 15 to 136 (LRFRELTVLR…AGPRGSLVVP (122 aa)) constitute an FAD-binding FR-type domain.

It belongs to the SIP oxidoreductase family.

The protein resides in the cytoplasm. The catalysed reaction is 2 a Fe(II)-siderophore + NADP(+) + H(+) = 2 a Fe(III)-siderophore + NADPH. Plays a role in iron homeostasis under excess nickel conditions. This is NADPH-dependent ferric-chelate reductase (yqjH) from Escherichia coli (strain K12).